The primary structure comprises 138 residues: Acidic phospholipase A2 5 (138 aa).

An N-terminal signal peptide occupies residues 1–16 (MRTLWIVAVWLIGVEG). 7 disulfides stabilise this stretch: cysteine 42–cysteine 131, cysteine 44–cysteine 60, cysteine 59–cysteine 111, cysteine 65–cysteine 138, cysteine 66–cysteine 104, cysteine 73–cysteine 97, and cysteine 91–cysteine 102. Tyrosine 43, glycine 45, and glycine 47 together coordinate Ca(2+). Histidine 63 is a catalytic residue. Residue aspartate 64 coordinates Ca(2+). Aspartate 105 is a catalytic residue.

This sequence belongs to the phospholipase A2 family. Group II subfamily. D49 sub-subfamily. It depends on Ca(2+) as a cofactor. As to expression, expressed by the venom gland.

The protein localises to the secreted. The enzyme catalyses a 1,2-diacyl-sn-glycero-3-phosphocholine + H2O = a 1-acyl-sn-glycero-3-phosphocholine + a fatty acid + H(+). Its function is as follows. PLA2 catalyzes the calcium-dependent hydrolysis of the 2-acyl groups in 3-sn-phosphoglycerides. This chain is Acidic phospholipase A2 5, found in Echis ocellatus (Ocellated saw-scaled viper).